The following is a 505-amino-acid chain: Deoxyguanosinetriphosphate triphosphohydrolase (505 aa).

An HD domain is found at Arg-66–Cys-273.

Belongs to the dGTPase family. Type 1 subfamily. As to quaternary structure, homotetramer. Mg(2+) serves as cofactor.

It catalyses the reaction dGTP + H2O = 2'-deoxyguanosine + triphosphate + H(+). DGTPase preferentially hydrolyzes dGTP over the other canonical NTPs. This is Deoxyguanosinetriphosphate triphosphohydrolase from Salmonella arizonae (strain ATCC BAA-731 / CDC346-86 / RSK2980).